A 288-amino-acid chain; its full sequence is Phosphopantetheinyl transferase (288 aa).

CoA contacts are provided by residues Arg60, 99–104, and 118–121; these read RTEMGK and NLSH. The Mg(2+) site is built by Asp139 and Glu196. Residue 196–200 coordinates CoA; it reads EAYLK.

It belongs to the P-Pant transferase superfamily. AcpS family. Monomer.

Its subcellular location is the cytoplasm. It localises to the cytosol. The catalysed reaction is apo-[ACP] + CoA = holo-[ACP] + adenosine 3',5'-bisphosphate + H(+). It functions in the pathway lipid metabolism; fatty acid biosynthesis. In terms of biological role, phosphopantetheinyl transferase that is essential for attaching phosphopantetheine to ACP domains of the polyunsaturated fatty acid (PUFA) synthase converting the inactive apo-synthase to the active holo-synthase. The chain is Phosphopantetheinyl transferase from Thraustochytrium sp. (strain ATCC 26185 / S-3).